The sequence spans 303 residues: S-methyl-5'-thioadenosine phosphorylase 1 (303 aa).

Phosphate is bound by residues Ser-14, 57-58 (RH), and 90-91 (SA). Met-198 is a binding site for substrate. Ser-199 is a binding site for phosphate. 222 to 224 (DYD) contacts substrate.

It belongs to the PNP/MTAP phosphorylase family. MTAP subfamily. In terms of assembly, homotrimer.

Its subcellular location is the cytoplasm. It is found in the nucleus. It carries out the reaction S-methyl-5'-thioadenosine + phosphate = 5-(methylsulfanyl)-alpha-D-ribose 1-phosphate + adenine. Its pathway is amino-acid biosynthesis; L-methionine biosynthesis via salvage pathway; S-methyl-5-thio-alpha-D-ribose 1-phosphate from S-methyl-5'-thioadenosine (phosphorylase route): step 1/1. In terms of biological role, catalyzes the reversible phosphorylation of S-methyl-5'-thioadenosine (MTA) to adenine and 5-methylthioribose-1-phosphate. Involved in the breakdown of MTA, a major by-product of polyamine biosynthesis. Responsible for the first step in the methionine salvage pathway after MTA has been generated from S-adenosylmethionine. Has broad substrate specificity with 6-aminopurine nucleosides as preferred substrates. In Puccinia graminis f. sp. tritici (strain CRL 75-36-700-3 / race SCCL) (Black stem rust fungus), this protein is S-methyl-5'-thioadenosine phosphorylase 1.